Here is a 513-residue protein sequence, read N- to C-terminus: Mannosyl-oligosaccharide alpha-1,2-mannosidase 1B (513 aa).

The signal sequence occupies residues 1-21 (MHLPSLSLSLTALAIASPSAA). 8 N-linked (GlcNAc...) asparagine glycosylation sites follow: N97, N117, N150, N184, N251, N322, N348, and N368. C334 and C363 are joined by a disulfide. E377 acts as the Proton donor in catalysis. T503 lines the Ca(2+) pocket.

The protein belongs to the glycosyl hydrolase 47 family. As to quaternary structure, monomer. Ca(2+) serves as cofactor. The cofactor is Mg(2+).

The protein localises to the cytoplasmic vesicle lumen. It carries out the reaction N(4)-(alpha-D-Man-(1-&gt;2)-alpha-D-Man-(1-&gt;2)-alpha-D-Man-(1-&gt;3)-[alpha-D-Man-(1-&gt;2)-alpha-D-Man-(1-&gt;3)-[alpha-D-Man-(1-&gt;2)-alpha-D-Man-(1-&gt;6)]-alpha-D-Man-(1-&gt;6)]-beta-D-Man-(1-&gt;4)-beta-D-GlcNAc-(1-&gt;4)-beta-D-GlcNAc)-L-asparaginyl-[protein] (N-glucan mannose isomer 9A1,2,3B1,2,3) + 4 H2O = N(4)-(alpha-D-Man-(1-&gt;3)-[alpha-D-Man-(1-&gt;3)-[alpha-D-Man-(1-&gt;6)]-alpha-D-Man-(1-&gt;6)]-beta-D-Man-(1-&gt;4)-beta-D-GlcNAc-(1-&gt;4)-beta-D-GlcNAc)-L-asparaginyl-[protein] (N-glucan mannose isomer 5A1,2) + 4 beta-D-mannose. The enzyme catalyses N(4)-(alpha-D-Man-(1-&gt;2)-alpha-D-Man-(1-&gt;2)-alpha-D-Man-(1-&gt;3)-[alpha-D-Man-(1-&gt;3)-[alpha-D-Man-(1-&gt;2)-alpha-D-Man-(1-&gt;6)]-alpha-D-Man-(1-&gt;6)]-beta-D-Man-(1-&gt;4)-beta-D-GlcNAc-(1-&gt;4)-beta-D-GlcNAc)-L-asparaginyl-[protein] (N-glucan mannose isomer 8A1,2,3B1,3) + 3 H2O = N(4)-(alpha-D-Man-(1-&gt;3)-[alpha-D-Man-(1-&gt;3)-[alpha-D-Man-(1-&gt;6)]-alpha-D-Man-(1-&gt;6)]-beta-D-Man-(1-&gt;4)-beta-D-GlcNAc-(1-&gt;4)-beta-D-GlcNAc)-L-asparaginyl-[protein] (N-glucan mannose isomer 5A1,2) + 3 beta-D-mannose. It participates in protein modification; protein glycosylation. Functionally, involved in the maturation of Asn-linked oligosaccharides. Progressively trims alpha-1,2-linked mannose residues from Man(9)GlcNAc(2) to produce Man(5)GlcNAc(2). The polypeptide is Mannosyl-oligosaccharide alpha-1,2-mannosidase 1B (mns1B) (Aspergillus phoenicis (Aspergillus saitoi)).